The following is a 253-amino-acid chain: Oxidoreductase AOL_s00215g277 (253 aa).

Residues 181–203 form a helical membrane-spanning segment; the sequence is FFGYWLTVILGYYIGSLLGYQPF.

The protein belongs to the oxidoreductase OpS7 family.

The protein localises to the membrane. Its pathway is secondary metabolite biosynthesis; terpenoid biosynthesis. Functionally, oxidoreductase; part of the gene cluster that mediates the biosynthesis of sesquiterpenyl epoxy-cyclohexenoids (SECs) such as anthrobotrisins and arthrosporols, metabolites that possess a novel hybrid carbon skeleton consisting of a polyketide-derived epoxycyclohexenol combined with a terpenoid-derived monocyclic sesquiterpenol substructure (PKS-PTS hybrid). The SEC pathway plays an important role for fungal soil colonization via decreasing fungal nematode-capturing ability. Within the pathway, the oxidoreductase AOL_s00215g277 seems to play a role in the farnesylation step of toluquinol to produce farnesyl hydroquinone, the hybrid precursor for biosynthesis of SECs. The pathway begins with the biosynthesis of 6-methylsalicylic acid (6-MSA), the first precursor of the polyketide-derived epoxycyclohexenol in arthrosporols, by the polyketide synthase (PKS) AOL_s00215g283 via condensation of 1 acetate and 3 malonate units. The 6-methylsalicylic acid decarboxylase AOL_s00215g281 then catalyzes the decarboxylation of 6-methylsalicylic acid to yield m-cresol. The cytochrome P450 monooxygenase AOL_s00215g282 further oxidizes m-cresol to yield toluquinol. With the assistance of the oxidoreductase AOL_s00215g277, the polyprenyl transferase AOL_s00215g276 catalyzes the farnesylation of toluquinol to produce farnesyl hydroquinone, the hybrid precursor for biosynthesis of SECs. Farnesyl hydroquinone undergoes epoxidation and then subsequent dehydrogenation to form farnesyl epoxy-quinone, the first and simplest SEC. The cytochrome P450 monooxygenase AOL_s00215g278 and the FAD-dependent monooxygenase AOL_s00215g279 might be involved in the oxygenation of the phenol moiety, most likely in the epoxy formation. The cytochrome P450 monooxygenases AOL_s00215g274 and AOL_s00215g280 are involved in specific regional ketone reductions at respectively C-4 and C-1 of farnesyl epoxy-quinone PubMed:33823587. The protein is Oxidoreductase AOL_s00215g277 of Arthrobotrys oligospora (strain ATCC 24927 / CBS 115.81 / DSM 1491) (Nematode-trapping fungus).